The primary structure comprises 452 residues: Prephenate dehydrogenase [NADP(+)] (452 aa).

14–43 contributes to the NADP(+) binding site; it reads KVIGIIGLGDMGLLYANKFTDAGWGVICCD. In terms of domain architecture, Prephenate/arogenate dehydrogenase spans 14-297; the sequence is KVIGIIGLGD…GKHTGLLLLD (284 aa).

The protein belongs to the prephenate/arogenate dehydrogenase family.

The catalysed reaction is prephenate + NADP(+) = 3-(4-hydroxyphenyl)pyruvate + CO2 + NADPH. Its pathway is amino-acid biosynthesis; L-tyrosine biosynthesis; (4-hydroxyphenyl)pyruvate from prephenate (NADP(+) route): step 1/1. In Saccharomyces cerevisiae (strain ATCC 204508 / S288c) (Baker's yeast), this protein is Prephenate dehydrogenase [NADP(+)] (TYR1).